Reading from the N-terminus, the 401-residue chain is Heparan-sulfate 6-O-sulfotransferase 1 (401 aa).

Residues 1–4 (MVER) are Cytoplasmic-facing. The chain crosses the membrane as a helical; Signal-anchor for type II membrane protein span at residues 5–27 (ASKFVLVVAGSACFMLILYQYAG). The Lumenal segment spans residues 28 to 401 (PGLSLGAPGG…DYMSHIIEKW (374 aa)). 83-91 (HIQKTGGTT) is a binding site for 3'-phosphoadenylyl sulfate. Residues 113–114 (KK), R130, W135, and H140 each bind substrate. Residue H140 is the Proton acceptor of the active site. 3'-phosphoadenylyl sulfate-binding residues include R175 and S183. Residues H187 and W194 each contribute to the substrate site. The N-linked (GlcNAc...) asparagine glycan is linked to N254. 307 to 309 (MQY) is a binding site for 3'-phosphoadenylyl sulfate. N310 carries N-linked (GlcNAc...) asparagine glycosylation. Residue 313-314 (RA) participates in 3'-phosphoadenylyl sulfate binding. The tract at residues 367–389 (ERLLHRSKEALPREDTEEPGRVP) is disordered.

This sequence belongs to the sulfotransferase 6 family. Post-translationally, N-glycosylated.

The protein resides in the membrane. It carries out the reaction alpha-D-glucosaminyl-[heparan sulfate](n) + 3'-phosphoadenylyl sulfate = 6-sulfo-alpha-D-glucosaminyl-[heparan sulfate](n) + adenosine 3',5'-bisphosphate + H(+). With respect to regulation, inhibited by dithiothreitol and stimulated by protamine. In terms of biological role, 6-O-sulfation enzyme which catalyzes the transfer of sulfate from 3'-phosphoadenosine 5'-phosphosulfate (PAPS) to position 6 of the N-sulfoglucosamine residue (GlcNS) of heparan sulfate. Also transfers sulfate to CDSNS-heparin and performs the crucial step modification in the biosynthesis of anticoagulant heparan sulfate (HSact). Critical for normal neuronal development where it may play a role in neuron branching. May also play a role in limb development. May prefer iduronic acid. The polypeptide is Heparan-sulfate 6-O-sulfotransferase 1 (Cricetulus griseus (Chinese hamster)).